The following is a 614-amino-acid chain: 1-deoxy-D-xylulose-5-phosphate synthase (614 aa).

Thiamine diphosphate-binding positions include His-74 and 115–117; that span reads AHS. Asp-146 is a binding site for Mg(2+). Thiamine diphosphate-binding positions include 147–148, Asn-175, Tyr-282, and Glu-363; that span reads GA. A Mg(2+)-binding site is contributed by Asn-175.

Belongs to the transketolase family. DXPS subfamily. In terms of assembly, homodimer. Mg(2+) serves as cofactor. The cofactor is thiamine diphosphate.

The catalysed reaction is D-glyceraldehyde 3-phosphate + pyruvate + H(+) = 1-deoxy-D-xylulose 5-phosphate + CO2. It functions in the pathway metabolic intermediate biosynthesis; 1-deoxy-D-xylulose 5-phosphate biosynthesis; 1-deoxy-D-xylulose 5-phosphate from D-glyceraldehyde 3-phosphate and pyruvate: step 1/1. In terms of biological role, catalyzes the acyloin condensation reaction between C atoms 2 and 3 of pyruvate and glyceraldehyde 3-phosphate to yield 1-deoxy-D-xylulose-5-phosphate (DXP). The chain is 1-deoxy-D-xylulose-5-phosphate synthase from Nitrosomonas europaea (strain ATCC 19718 / CIP 103999 / KCTC 2705 / NBRC 14298).